A 500-amino-acid chain; its full sequence is NAD(P)H-quinone oxidoreductase chain 4, chloroplastic (500 aa).

Helical transmembrane passes span 4 to 24 (FPWL…MLFL), 35 to 55 (YTIC…CYNF), 87 to 107 (IGTI…AFPV), 113 to 130 (LFHF…GSFS), 134 to 154 (LLLF…LLAM), 167 to 187 (FILY…GLSL), 211 to 231 (ILFY…IPLH), 242 to 262 (HYST…YGLV), 272 to 292 (AHSM…IYAA), 305 to 325 (IAYS…SITD), 330 to 350 (GAIL…FLAG), 386 to 406 (LALP…GIIT), 416 to 436 (ILII…LLSM), and 462 to 482 (LFLS…PDFV).

Belongs to the complex I subunit 4 family.

It is found in the plastid. The protein resides in the chloroplast thylakoid membrane. It catalyses the reaction a plastoquinone + NADH + (n+1) H(+)(in) = a plastoquinol + NAD(+) + n H(+)(out). The enzyme catalyses a plastoquinone + NADPH + (n+1) H(+)(in) = a plastoquinol + NADP(+) + n H(+)(out). This is NAD(P)H-quinone oxidoreductase chain 4, chloroplastic from Lepidium virginicum (Virginia pepperweed).